The sequence spans 546 residues: Probable ganciclovir kinase (546 aa).

The span at 1–11 (MEQLKTPQNQK) shows a compositional bias: polar residues. A disordered region spans residues 1 to 29 (MEQLKTPQNQKTRPRNMLPKKKGKELKKR). Basic residues predominate over residues 12–29 (TRPRNMLPKKKGKELKKR). Residues 185 to 193 (LGSGSYGMV) and lysine 202 each bind ATP. The Proton acceptor role is filled by aspartate 297.

The protein belongs to the protein kinase superfamily. Tyr protein kinase family. HCMV ganciclovir subfamily.

Functionally, phosphorylates the antiviral nucleoside analog ganciclovir. The chain is Probable ganciclovir kinase (U69) from Human herpesvirus 7 (strain JI) (HHV-7).